Consider the following 327-residue polypeptide: Vacuolar protein sorting-associated protein 26A (327 aa).

Residues Arg306 to Met327 form a disordered region. Ser315 bears the Phosphoserine mark. The span at Pro316–Met327 shows a compositional bias: polar residues.

The protein belongs to the VPS26 family. As to quaternary structure, component of the heterotrimeric retromer cargo-selective complex (CSC), also described as vacuolar protein sorting subcomplex (VPS), formed by VPS26 (VPS26A or VPS26B), VPS29 and VPS35. The CSC has a highly elongated structure with VPS26 and VPS29 binding independently at opposite distal ends of VPS35 as central platform. The CSC is believed to associate with variable sorting nexins to form functionally distinct retromer complex variants. The originally described retromer complex (also called SNX-BAR retromer) is a pentamer containing the CSC and a heterodimeric membrane-deforming subcomplex formed between SNX1 or SNX2 and SNX5 or SNX6 (also called SNX-BAR subcomplex); the respective CSC and SNX-BAR subcomplexes associate with low affinity. The CSC associates with SNX3 to form a SNX3-retromer complex. The CSC associates with SNX27, the WASH complex and the SNX-BAR subcomplex to form the SNX27-retromer complex. Interacts with VPS29, VPS35, SNX1, SNX2, SNX5, SNX6, SNX3, SNX27, RAB7A, ECPAS, EHD1, WASHC5, SORL1.

It localises to the cytoplasm. It is found in the endosome membrane. The protein resides in the early endosome. Its function is as follows. Acts as a component of the retromer cargo-selective complex (CSC). The CSC is believed to be the core functional component of retromer or respective retromer complex variants acting to prevent missorting of selected transmembrane cargo proteins into the lysosomal degradation pathway. The recruitment of the CSC to the endosomal membrane involves RAB7A and SNX3. The SNX-BAR retromer mediates retrograde transport of cargo proteins from endosomes to the trans-Golgi network (TGN) and is involved in endosome-to-plasma membrane transport for cargo protein recycling. The SNX3-retromer mediates the retrograde endosome-to-TGN transport of WLS distinct from the SNX-BAR retromer pathway. The SNX27-retromer is believed to be involved in endosome-to-plasma membrane trafficking and recycling of a broad spectrum of cargo proteins. The CSC seems to act as recruitment hub for other proteins, such as the WASH complex and TBC1D5. Required for retrograde transport of lysosomal enzyme receptor IGF2R. Required to regulate transcytosis of the polymeric immunoglobulin receptor (pIgR-pIgA). Required for the endosomal localization of WASHC2A (indicative for the WASH complex). Required for the endosomal localization of TBC1D5. Mediates retromer cargo recognition of SORL1 and is involved in trafficking of SORL1 implicated in sorting and processing of APP. Involved in retromer-independent lysosomal sorting of F2R. Involved in recycling of ADRB2. Enhances the affinity of SNX27 for PDZ-binding motifs in cargo proteins. This Homo sapiens (Human) protein is Vacuolar protein sorting-associated protein 26A.